The sequence spans 208 residues: Uracil phosphoribosyltransferase (208 aa).

5-phospho-alpha-D-ribose 1-diphosphate contacts are provided by residues Arg-78, Arg-103, and 130-138 (DPMLATANS). Uracil contacts are provided by residues Ile-193 and 198–200 (GDA). 5-phospho-alpha-D-ribose 1-diphosphate is bound at residue Asp-199.

The protein belongs to the UPRTase family. It depends on Mg(2+) as a cofactor.

The catalysed reaction is UMP + diphosphate = 5-phospho-alpha-D-ribose 1-diphosphate + uracil. It functions in the pathway pyrimidine metabolism; UMP biosynthesis via salvage pathway; UMP from uracil: step 1/1. Its activity is regulated as follows. Allosterically activated by GTP. Its function is as follows. Catalyzes the conversion of uracil and 5-phospho-alpha-D-ribose 1-diphosphate (PRPP) to UMP and diphosphate. This is Uracil phosphoribosyltransferase from Brucella melitensis biotype 2 (strain ATCC 23457).